We begin with the raw amino-acid sequence, 229 residues long: Potassium/proton antiporter CemA (229 aa).

3 helical membrane-spanning segments follow: residues alanine 6–cysteine 26, isoleucine 107–alanine 127, and isoleucine 189–isoleucine 209.

The protein belongs to the CemA family.

The protein resides in the plastid. Its subcellular location is the chloroplast inner membrane. It carries out the reaction K(+)(in) + H(+)(out) = K(+)(out) + H(+)(in). Contributes to K(+)/H(+) antiport activity by supporting proton efflux to control proton extrusion and homeostasis in chloroplasts in a light-dependent manner to modulate photosynthesis. Prevents excessive induction of non-photochemical quenching (NPQ) under continuous-light conditions. Indirectly promotes efficient inorganic carbon uptake into chloroplasts. The polypeptide is Potassium/proton antiporter CemA (Crucihimalaya wallichii (Rock-cress)).